The primary structure comprises 398 residues: Probable purine permease 17 (398 aa).

The interval 1–26 is disordered; that stretch reads MEMSKASKQTTRHEESEHVQNPEPDQ. The segment covering 11–20 has biased composition (basic and acidic residues); sequence TRHEESEHVQ. Position 29 is a phosphoserine (Ser29). Helical transmembrane passes span 43–63, 88–108, 127–147, 155–175, 183–203, 219–239, 258–278, 301–321, 332–352, and 355–375; these read ISVS…MLLL, WTQA…FFIF, LFFL…LFAL, GIFS…TAII, WIII…PDFG, WLAF…QLGF, VLEM…VGLF, VLSL…MIGL, VVHM…FDFM, and VFSW…GSYF.

Belongs to the purine permeases (TC 2.A.7.14) family.

The protein resides in the membrane. This is Probable purine permease 17 (PUP17) from Arabidopsis thaliana (Mouse-ear cress).